Here is a 97-residue protein sequence, read N- to C-terminus: Large ribosomal subunit protein eL21 (97 aa).

Residues 1 to 24 form a disordered region; it reads MQKSEGFRSKTRYKLQKHPRQKGM. Basic residues predominate over residues 9-21; it reads SKTRYKLQKHPRQ.

The protein belongs to the eukaryotic ribosomal protein eL21 family.

This chain is Large ribosomal subunit protein eL21, found in Methanococcus maripaludis (strain DSM 14266 / JCM 13030 / NBRC 101832 / S2 / LL).